The sequence spans 59 residues: Protein translocase subunit SecE (59 aa).

A helical membrane pass occupies residues 30 to 50; that stretch reads ITVISTVIFFVIFFALLDTGI.

Belongs to the SecE/SEC61-gamma family. As to quaternary structure, component of the Sec protein translocase complex. Heterotrimer consisting of SecY, SecE and SecG subunits. The heterotrimers can form oligomers, although 1 heterotrimer is thought to be able to translocate proteins. Interacts with the ribosome. Interacts with SecDF, and other proteins may be involved. Interacts with SecA.

It localises to the cell membrane. In terms of biological role, essential subunit of the Sec protein translocation channel SecYEG. Clamps together the 2 halves of SecY. May contact the channel plug during translocation. The protein is Protein translocase subunit SecE of Bacillus subtilis (strain 168).